The chain runs to 394 residues: Putative 8-amino-7-oxononanoate synthase (394 aa).

Substrate is bound at residue Arg-30. 117 to 118 provides a ligand contact to pyridoxal 5'-phosphate; sequence GY. His-142 is a substrate binding site. Residues Ser-190, 215-218, and 246-249 contribute to the pyridoxal 5'-phosphate site; these read DEAH and TLSK. Lys-249 carries the post-translational modification N6-(pyridoxal phosphate)lysine. Position 364 (Thr-364) interacts with substrate.

Belongs to the class-II pyridoxal-phosphate-dependent aminotransferase family. BioF subfamily. As to quaternary structure, homodimer. Pyridoxal 5'-phosphate is required as a cofactor.

The enzyme catalyses 6-carboxyhexanoyl-[ACP] + L-alanine + H(+) = (8S)-8-amino-7-oxononanoate + holo-[ACP] + CO2. The protein operates within cofactor biosynthesis; biotin biosynthesis. Its function is as follows. Catalyzes the decarboxylative condensation of pimeloyl-[acyl-carrier protein] and L-alanine to produce 8-amino-7-oxononanoate (AON), [acyl-carrier protein], and carbon dioxide. This Nostoc punctiforme (strain ATCC 29133 / PCC 73102) protein is Putative 8-amino-7-oxononanoate synthase (bioF).